Consider the following 355-residue polypeptide: Phospho-N-acetylmuramoyl-pentapeptide-transferase (355 aa).

10 helical membrane passes run 14 to 34, 40 to 60, 84 to 104, 107 to 127, 147 to 167, 176 to 196, 205 to 225, 227 to 247, 268 to 290, and 334 to 354; these read PTGTHLLILLTGLLFLLVVFF, LLIPLMATTLISAGLGCQVVP, GTPTMGGSFFVPVALIFALIW, FTPNVVAVALLTFVYMGIGWL, LILQITGAVLFCLWMLVNQVS, LVIPLGFFFWILAGFVLVAES, VDGLAGGTGAIAFLGLGIIIA, SHPDLAIFCTCFAGACLGFIF, ALAAVGLIAGHLWGLFLISGLFF, and TKIVGAFYLVNALLVVLAIWS.

This sequence belongs to the glycosyltransferase 4 family. MraY subfamily. Requires Mg(2+) as cofactor.

Its subcellular location is the cell inner membrane. It carries out the reaction UDP-N-acetyl-alpha-D-muramoyl-L-alanyl-gamma-D-glutamyl-meso-2,6-diaminopimeloyl-D-alanyl-D-alanine + di-trans,octa-cis-undecaprenyl phosphate = di-trans,octa-cis-undecaprenyl diphospho-N-acetyl-alpha-D-muramoyl-L-alanyl-D-glutamyl-meso-2,6-diaminopimeloyl-D-alanyl-D-alanine + UMP. The protein operates within cell wall biogenesis; peptidoglycan biosynthesis. Functionally, catalyzes the initial step of the lipid cycle reactions in the biosynthesis of the cell wall peptidoglycan: transfers peptidoglycan precursor phospho-MurNAc-pentapeptide from UDP-MurNAc-pentapeptide onto the lipid carrier undecaprenyl phosphate, yielding undecaprenyl-pyrophosphoryl-MurNAc-pentapeptide, known as lipid I. This Microcystis aeruginosa (strain NIES-843 / IAM M-2473) protein is Phospho-N-acetylmuramoyl-pentapeptide-transferase.